A 90-amino-acid chain; its full sequence is Probable dynein light chain 2, cytoplasmic (90 aa).

The protein belongs to the dynein light chain family.

The protein localises to the cytoplasm. It localises to the cytoskeleton. Functionally, acts as one of several non-catalytic accessory components of a dynein complex. This Caenorhabditis elegans protein is Probable dynein light chain 2, cytoplasmic (dlc-2).